Consider the following 79-residue polypeptide: uncharacterized protein (79 aa).

A helical transmembrane segment spans residues 15 to 37; it reads KSIVSVLALTSLGCGVFVISATA.

It localises to the membrane. This is an uncharacterized protein from Dictyostelium discoideum (Social amoeba).